Consider the following 415-residue polypeptide: Gamma-glutamyl phosphate reductase (415 aa).

Belongs to the gamma-glutamyl phosphate reductase family.

Its subcellular location is the cytoplasm. The catalysed reaction is L-glutamate 5-semialdehyde + phosphate + NADP(+) = L-glutamyl 5-phosphate + NADPH + H(+). Its pathway is amino-acid biosynthesis; L-proline biosynthesis; L-glutamate 5-semialdehyde from L-glutamate: step 2/2. In terms of biological role, catalyzes the NADPH-dependent reduction of L-glutamate 5-phosphate into L-glutamate 5-semialdehyde and phosphate. The product spontaneously undergoes cyclization to form 1-pyrroline-5-carboxylate. The sequence is that of Gamma-glutamyl phosphate reductase from Mycobacterium sp. (strain JLS).